Consider the following 36-residue polypeptide: Photosystem I reaction center subunit VIII (36 aa).

The helical transmembrane segment at 5-27 (FLPSILVPLVGLVFPAIAIASLF) threads the bilayer.

Belongs to the PsaI family.

The protein resides in the plastid. Its subcellular location is the chloroplast thylakoid membrane. Functionally, may help in the organization of the PsaL subunit. This is Photosystem I reaction center subunit VIII from Chaetosphaeridium globosum (Charophycean green alga).